Reading from the N-terminus, the 270-residue chain is 4-hydroxy-tetrahydrodipicolinate reductase (270 aa).

Residues 9-14 and Glu-35 each bind NAD(+); that span reads GSGGRM. Arg-36 is a binding site for NADP(+). NAD(+)-binding positions include 99 to 101 and 123 to 126; these read GTT and ASNY. Catalysis depends on His-156, which acts as the Proton donor/acceptor. His-157 serves as a coordination point for (S)-2,3,4,5-tetrahydrodipicolinate. The active-site Proton donor is the Lys-160. (S)-2,3,4,5-tetrahydrodipicolinate is bound at residue 166-167; that stretch reads GT.

This sequence belongs to the DapB family.

It is found in the cytoplasm. The catalysed reaction is (S)-2,3,4,5-tetrahydrodipicolinate + NAD(+) + H2O = (2S,4S)-4-hydroxy-2,3,4,5-tetrahydrodipicolinate + NADH + H(+). It carries out the reaction (S)-2,3,4,5-tetrahydrodipicolinate + NADP(+) + H2O = (2S,4S)-4-hydroxy-2,3,4,5-tetrahydrodipicolinate + NADPH + H(+). It functions in the pathway amino-acid biosynthesis; L-lysine biosynthesis via DAP pathway; (S)-tetrahydrodipicolinate from L-aspartate: step 4/4. Catalyzes the conversion of 4-hydroxy-tetrahydrodipicolinate (HTPA) to tetrahydrodipicolinate. The polypeptide is 4-hydroxy-tetrahydrodipicolinate reductase (Histophilus somni (strain 2336) (Haemophilus somnus)).